The sequence spans 172 residues: Translation initiation factor IF-3 (172 aa).

This sequence belongs to the IF-3 family. In terms of assembly, monomer.

It is found in the cytoplasm. In terms of biological role, IF-3 binds to the 30S ribosomal subunit and shifts the equilibrium between 70S ribosomes and their 50S and 30S subunits in favor of the free subunits, thus enhancing the availability of 30S subunits on which protein synthesis initiation begins. This chain is Translation initiation factor IF-3, found in Geobacter metallireducens (strain ATCC 53774 / DSM 7210 / GS-15).